We begin with the raw amino-acid sequence, 1668 residues long: Zinc finger CCCH domain-containing protein 13 (1668 aa).

Disordered regions lie at residues methionine 1–alanine 38 and threonine 56–asparagine 157. Polar residues predominate over residues valine 10 to arginine 23. The segment at serine 36 to serine 64 adopts a C3H1-type zinc-finger fold. 2 positions are modified to phosphoserine: serine 64 and serine 77. A compositionally biased stretch (basic and acidic residues) spans arginine 76–glutamate 136. Residues lysine 179 and lysine 194 each participate in a glycyl lysine isopeptide (Lys-Gly) (interchain with G-Cter in SUMO2) cross-link. Disordered regions lie at residues glutamate 190–alanine 1112 and alanine 1125–aspartate 1466. A phosphoserine mark is found at serine 198, serine 207, serine 209, and serine 211. The span at serine 204 to arginine 213 shows a compositional bias: low complexity. The segment covering lysine 214–serine 224 has biased composition (basic residues). Threonine 237 carries the phosphothreonine modification. Serine 238 and serine 242 each carry phosphoserine. Positions alanine 239 to asparagine 254 are enriched in polar residues. The residue at position 263 (threonine 263) is a Phosphothreonine. Serine 265 carries the post-translational modification Phosphoserine. Residues lysine 283–arginine 315 are compositionally biased toward basic and acidic residues. Residues serine 316, serine 318, serine 325, and serine 328 each carry the phosphoserine modification. Residues histidine 323–serine 346 are compositionally biased toward low complexity. A phosphothreonine mark is found at threonine 354 and threonine 364. Residues serine 370, serine 372, and serine 381 each carry the phosphoserine modification. Over residues serine 370–proline 382 the composition is skewed to low complexity. Composition is skewed to basic and acidic residues over residues proline 394–arginine 434 and serine 442–serine 575. The span at aspartate 584 to histidine 593 shows a compositional bias: low complexity. The segment covering aspartate 594 to arginine 640 has biased composition (basic and acidic residues). Serine 643 bears the Phosphoserine mark. The stretch at isoleucine 645–aspartate 789 forms a coiled coil. Basic and acidic residues predominate over residues glycine 649–lysine 821. Residues serine 831, serine 833, serine 837, serine 845, serine 848, serine 853, serine 873, serine 875, and serine 877 each carry the phosphoserine modification. Basic and acidic residues predominate over residues leucine 881–lysine 957. Threonine 882 carries the phosphothreonine modification. Serine 943 carries the post-translational modification Phosphoserine. Residues lysine 958 to lysine 969 show a composition bias toward basic residues. Over residues lysine 970 to asparagine 981 the composition is skewed to basic and acidic residues. 5 positions are modified to phosphoserine: serine 986, serine 993, serine 1010, serine 1014, and serine 1017. Residues lysine 996–serine 1010 are compositionally biased toward basic residues. Residue threonine 1033 is modified to Phosphothreonine. Residues proline 1073–histidine 1083 show a composition bias toward basic and acidic residues. Low complexity-rich tracts occupy residues threonine 1084–leucine 1100 and alanine 1125–asparagine 1153. Over residues threonine 1163–arginine 1188 the composition is skewed to basic and acidic residues. The residue at position 1170 (threonine 1170) is a Phosphothreonine. Serine 1191, serine 1194, serine 1208, and serine 1210 each carry phosphoserine. Residues serine 1213–glycine 1223 show a composition bias toward basic and acidic residues. Serine 1230 carries the phosphoserine modification. Basic and acidic residues-rich tracts occupy residues glycine 1231–valine 1286 and aspartate 1294–phenylalanine 1379. The stretch at glutamine 1300–serine 1366 forms a coiled coil. Serine 1364, serine 1366, serine 1382, serine 1386, serine 1406, serine 1409, serine 1438, leucine 1453, glycine 1456, serine 1465, and aspartate 1466 each carry phosphoserine. 2 stretches are compositionally biased toward basic and acidic residues: residues serine 1386–leucine 1421 and glutamate 1429–serine 1438.

The protein belongs to the ZC3H13 family. As to quaternary structure, component of the WMM complex, a N6-methyltransferase complex composed of a catalytic subcomplex, named MAC, and of an associated subcomplex, named MACOM. The MAC subcomplex is composed of METTL3 and METTL14. The MACOM subcomplex is composed of WTAP, ZC3H13, CBLL1/HAKAI, VIRMA, and, in some cases of RBM15 (RBM15 or RBM15B). Also a component of a MACOM-like complex, named WTAP complex, composed of WTAP, ZC3H13, CBLL1/HAKAI, VIRMA, RBM15, BCLAF1 and THRAP3.

The protein localises to the nucleus speckle. The protein resides in the nucleus. It is found in the nucleoplasm. Its function is as follows. Associated component of the WMM complex, a complex that mediates N6-methyladenosine (m6A) methylation of RNAs, a modification that plays a role in the efficiency of mRNA splicing and RNA processing. Acts as a key regulator of m6A methylation by promoting m6A methylation of mRNAs at the 3'-UTR. Controls embryonic stem cells (ESCs) pluripotency via its role in m6A methylation. In the WMM complex, anchors component of the MACOM subcomplex in the nucleus. Also required for bridging WTAP to the RNA-binding component RBM15 (RBM15 or RBM15B). The chain is Zinc finger CCCH domain-containing protein 13 from Homo sapiens (Human).